An 86-amino-acid polypeptide reads, in one-letter code: Putative membrane protein insertion efficiency factor (86 aa).

Belongs to the UPF0161 family.

The protein localises to the cell inner membrane. Could be involved in insertion of integral membrane proteins into the membrane. The protein is Putative membrane protein insertion efficiency factor of Oleidesulfovibrio alaskensis (strain ATCC BAA-1058 / DSM 17464 / G20) (Desulfovibrio alaskensis).